The following is a 298-amino-acid chain: MFNGIIVIDKAAGMTSGDVVYKLRRLLKQKKIGHAGTLDPEVTGVLPIALGQATKLIELMHERPKAYVGEGMLGLATDSYDLEGKILAERALSQPVSDQAIKAAMEKLIGEIVQQPPIYSAVRVNGKRLYEYAREGIPVERPKRTVQVFRYDLTAPSQFDPEKGRQTFTYEVECSKGTYVRSLVNDLGEELGLPAVMTKLRRTASSGYKLQDAVTLEELADNLDHAEDYIQPIDSFFADYQQVDLDAALWQQVKNGAWIKLPLDADKVALRYNKTVKAIYRAKGQGLYCPDLMLLSNE.

D39 acts as the Nucleophile in catalysis.

This sequence belongs to the pseudouridine synthase TruB family. Type 1 subfamily.

The catalysed reaction is uridine(55) in tRNA = pseudouridine(55) in tRNA. Its function is as follows. Responsible for synthesis of pseudouridine from uracil-55 in the psi GC loop of transfer RNAs. This Lactobacillus delbrueckii subsp. bulgaricus (strain ATCC BAA-365 / Lb-18) protein is tRNA pseudouridine synthase B.